The following is a 185-amino-acid chain: Elongation factor P (185 aa).

This sequence belongs to the elongation factor P family.

The protein resides in the cytoplasm. The protein operates within protein biosynthesis; polypeptide chain elongation. In terms of biological role, involved in peptide bond synthesis. Stimulates efficient translation and peptide-bond synthesis on native or reconstituted 70S ribosomes in vitro. Probably functions indirectly by altering the affinity of the ribosome for aminoacyl-tRNA, thus increasing their reactivity as acceptors for peptidyl transferase. In Thermotoga petrophila (strain ATCC BAA-488 / DSM 13995 / JCM 10881 / RKU-1), this protein is Elongation factor P.